The sequence spans 142 residues: Large ribosomal subunit protein uL13 (142 aa).

Belongs to the universal ribosomal protein uL13 family. As to quaternary structure, part of the 50S ribosomal subunit.

Its function is as follows. This protein is one of the early assembly proteins of the 50S ribosomal subunit, although it is not seen to bind rRNA by itself. It is important during the early stages of 50S assembly. This chain is Large ribosomal subunit protein uL13, found in Aliivibrio fischeri (strain ATCC 700601 / ES114) (Vibrio fischeri).